A 104-amino-acid chain; its full sequence is NADH-quinone oxidoreductase subunit K (104 aa).

The next 3 helical transmembrane spans lie at 4 to 24 (VPASAYLTLAIILFCIGLFGA), 31 to 51 (VIVLVCIELMLNAANLNLVAF), and 67 to 87 (LFTMAVAAAEAAVGLAILIAL).

Belongs to the complex I subunit 4L family. In terms of assembly, NDH-1 is composed of 14 different subunits. Subunits NuoA, H, J, K, L, M, N constitute the membrane sector of the complex.

Its subcellular location is the cell membrane. It carries out the reaction a quinone + NADH + 5 H(+)(in) = a quinol + NAD(+) + 4 H(+)(out). Its function is as follows. NDH-1 shuttles electrons from NADH, via FMN and iron-sulfur (Fe-S) centers, to quinones in the respiratory chain. The immediate electron acceptor for the enzyme in this species is believed to be a menaquinone. Couples the redox reaction to proton translocation (for every two electrons transferred, four hydrogen ions are translocated across the cytoplasmic membrane), and thus conserves the redox energy in a proton gradient. The chain is NADH-quinone oxidoreductase subunit K from Bacillus cereus (strain G9842).